We begin with the raw amino-acid sequence, 746 residues long: MDHTYQYSWIIPFIPLPVPILLGVGLLLFPTATKNLRRMWTFLSIFLLSIVMIFSLYLSIQQIFLSCIHQNVWSWTINNEFSFEFGYFIDPLTSIMSILITTVGILVLIYSDNYMSHDQGYLRFFAYMGFFNTSMLGLVTSSNLIQVYFFWELVGMCSYLLIGFWFTRPIAANACQKAFVTNRLGDFGLLLGILGLYWITGSFEFQDLFEIFNNFILNNRVNLLFLTLCAFLLFVGPIAKSAQFPLHVWLPDAMEGPTPISALIHAATMVAAGIFLVARLLPLFIVIPSIMYIISLIGIITVLLGATLALAQKDIKRGLAYSTMSQLGYMMLALGMGSYRSALFHLITHAYSKALLFLGSGSIIHSMEAIVGYSPDKSQNMILMGGLTKHVPITKTAFLVGTLSLCGIPPLACFWSKDEILNDSLLFSPIFAIIACSTAGLTAFYMFRIYFLTFEGHLNTYFINYSGKKSSSLYSLSLWGKEEEKKLNRNFGLVPLLTMNNTKRASFFCNKTYKISNNVRNQIFITIENFGLNKKTFYYPHESDNTILFPMLVLLLFTLFIGAIGIPFNQEGIDFDILSKLFTPSINLLHKNSQNFVDWYEFLRNATFSVSIAVFGIFIAYCLYKPFYSSLLNLTLLNSFQKWNSKRIRWEKLINFVYKWSYNRGYVDAFFKTSLIESIRRLAKQTNFFDKRIIDGITNGVGITSFFVGEVTKYIGGSRISSYLFLYLSYVLIFLMILFFFYFEKF.

16 consecutive transmembrane segments (helical) span residues 9-29 (WIIP…LLLF), 40-60 (WTFL…YLSI), 89-109 (IDPL…LVLI), 125-145 (FAYM…SNLI), 147-167 (VYFF…FWFT), 185-205 (GDFG…SFEF), 221-241 (VNLL…IAKS), 258-278 (TPIS…FLVA), 280-300 (LLPL…IGII), 327-347 (LGYM…FHLI), 354-374 (ALLF…VGYS), 396-416 (TAFL…CFWS), 425-445 (LLFS…TAFY), 547-567 (ILFP…IGIP), 608-628 (FSVS…KPFY), and 723-743 (YLFL…FFYF).

It belongs to the complex I subunit 5 family. NDH is composed of at least 16 different subunits, 5 of which are encoded in the nucleus.

It localises to the plastid. Its subcellular location is the chloroplast thylakoid membrane. The enzyme catalyses a plastoquinone + NADH + (n+1) H(+)(in) = a plastoquinol + NAD(+) + n H(+)(out). It carries out the reaction a plastoquinone + NADPH + (n+1) H(+)(in) = a plastoquinol + NADP(+) + n H(+)(out). Functionally, NDH shuttles electrons from NAD(P)H:plastoquinone, via FMN and iron-sulfur (Fe-S) centers, to quinones in the photosynthetic chain and possibly in a chloroplast respiratory chain. The immediate electron acceptor for the enzyme in this species is believed to be plastoquinone. Couples the redox reaction to proton translocation, and thus conserves the redox energy in a proton gradient. This is NAD(P)H-quinone oxidoreductase subunit 5, chloroplastic (ndhF) from Crucihimalaya wallichii (Rock-cress).